The chain runs to 179 residues: Apoptosis regulator DPV022 (179 aa).

Residues V148–I170 traverse the membrane as a helical segment.

As to quaternary structure, interacts with host BAX and BAK1.

The protein resides in the host mitochondrion. The protein localises to the host membrane. Plays a role in the inhibition of host apoptosis by sequestering and inactivating several proapoptotic BCL-2 proteins, including BAK1 and BAX. Prevents the conformational activation of both of them. In Deerpox virus (strain Mule deer/United States/W-848-83/1983) (DPV), this protein is Apoptosis regulator DPV022 (DPV022).